The sequence spans 290 residues: MAHAECSLLSEADFVMTTDRSVFYISDGTAITAEVLGHAVLSQFPVNITSLTLPFVENVQRALAVKAQINALYQQSGVRPLVFFSIVTPEVRDIIVQSDGFCQDIVQALVAPLQQELGLSPAPVAHRTHGLDASNLGKYDARIAAIDYTLAHDDGISLRGLEDAQVILLGVSRCGKTPTSLYLAMQFGIRAANYPFIADDMDNLKLPPALRAHQNKLFGLTIDPERLAAIRQERAENTRYASMRQCRLEVGEVEALFRTHQIRYLNSTNYSVEEIATKILDIMGLTRRMY.

170–177 is an ADP binding site; the sequence is GVSRCGKT.

This sequence belongs to the pyruvate, phosphate/water dikinase regulatory protein family. PSRP subfamily.

The catalysed reaction is [pyruvate, water dikinase] + ADP = [pyruvate, water dikinase]-phosphate + AMP + H(+). The enzyme catalyses [pyruvate, water dikinase]-phosphate + phosphate + H(+) = [pyruvate, water dikinase] + diphosphate. Functionally, bifunctional serine/threonine kinase and phosphorylase involved in the regulation of the phosphoenolpyruvate synthase (PEPS) by catalyzing its phosphorylation/dephosphorylation. The sequence is that of Putative phosphoenolpyruvate synthase regulatory protein (ydiA) from Enterobacter agglomerans (Erwinia herbicola).